The chain runs to 391 residues: Leucine aminopeptidase 1 (391 aa).

An N-terminal signal peptide occupies residues 1–19 (MKLSIALALGATASTGVLA). A propeptide spanning residues 20–91 (AVVPQQEPLI…YPTLHAGSYV (72 aa)) is cleaved from the precursor. An N-linked (GlcNAc...) asparagine glycan is attached at Asn183. 2 residues coordinate Zn(2+): His191 and Asp210. The N-linked (GlcNAc...) asparagine glycan is linked to Asn235. The Zn(2+) site is built by Glu249 and Asp276. Cys325 and Cys329 are disulfide-bonded. His358 provides a ligand contact to Zn(2+).

The protein belongs to the peptidase M28 family. M28E subfamily. Monomer. Requires Zn(2+) as cofactor.

The protein resides in the secreted. Its function is as follows. Extracellular aminopeptidase that allows assimilation of proteinaceous substrates. The polypeptide is Leucine aminopeptidase 1 (lap1) (Aspergillus niger (strain ATCC MYA-4892 / CBS 513.88 / FGSC A1513)).